The sequence spans 160 residues: Large ribosomal subunit protein uL22c (160 aa).

Belongs to the universal ribosomal protein uL22 family. As to quaternary structure, part of the 50S ribosomal subunit.

Its subcellular location is the plastid. The protein localises to the chloroplast. Its function is as follows. This protein binds specifically to 23S rRNA. Functionally, the globular domain of the protein is located near the polypeptide exit tunnel on the outside of the subunit, while an extended beta-hairpin is found that lines the wall of the exit tunnel in the center of the 70S ribosome. The chain is Large ribosomal subunit protein uL22c (rpl22) from Aethionema cordifolium (Lebanon stonecress).